We begin with the raw amino-acid sequence, 398 residues long: Succinate--CoA ligase [ADP-forming] subunit beta (398 aa).

The 246-residue stretch at 9 to 254 (KALLHEFGVP…ETEEDAKEIE (246 aa)) folds into the ATP-grasp domain. Residues Lys46, 53-55 (GRG), Glu109, Ser112, and Glu117 each bind ATP. The Mg(2+) site is built by Asn209 and Asp223. Residues Asn274 and 331–333 (GIM) each bind substrate.

It belongs to the succinate/malate CoA ligase beta subunit family. In terms of assembly, heterotetramer of two alpha and two beta subunits. It depends on Mg(2+) as a cofactor.

It carries out the reaction succinate + ATP + CoA = succinyl-CoA + ADP + phosphate. The catalysed reaction is GTP + succinate + CoA = succinyl-CoA + GDP + phosphate. It participates in carbohydrate metabolism; tricarboxylic acid cycle; succinate from succinyl-CoA (ligase route): step 1/1. Succinyl-CoA synthetase functions in the citric acid cycle (TCA), coupling the hydrolysis of succinyl-CoA to the synthesis of either ATP or GTP and thus represents the only step of substrate-level phosphorylation in the TCA. The beta subunit provides nucleotide specificity of the enzyme and binds the substrate succinate, while the binding sites for coenzyme A and phosphate are found in the alpha subunit. The protein is Succinate--CoA ligase [ADP-forming] subunit beta of Bradyrhizobium sp. (strain ORS 278).